The primary structure comprises 604 residues: Lipoma-preferred partner homolog (604 aa).

Disordered regions lie at residues 31-96 and 129-381; these read TPSI…LDDV and DLES…AFRP. Residues 32–41 show a composition bias toward polar residues; that stretch reads PSISVSTQQT. Composition is skewed to low complexity over residues 42–53 and 143–161; these read PKKFAPVVAPKP and GSGT…TPVT. The segment covering 207 to 226 has biased composition (polar residues); the sequence is SYTTASTPSRPTFNVQVRTA. Positions 365–377 are enriched in low complexity; sequence SGYPSSGPTSSTP. 3 LIM zinc-binding domains span residues 406–465, 466–526, and 527–595; these read GRCA…INTL, EQCS…KFAP, and RCSV…RIQA.

Belongs to the zyxin/ajuba family.

The protein resides in the nucleus. The protein localises to the cytoplasm. Its subcellular location is the cell junction. In terms of biological role, may play a structural role at sites of cell adhesion in maintaining cell shape and motility. May be involved in signal transduction from cell adhesion sites to the nucleus. This Gallus gallus (Chicken) protein is Lipoma-preferred partner homolog (LPP).